We begin with the raw amino-acid sequence, 415 residues long: MRVLVRYASVMEACGLTVPPSRWRLALARMANRPAPESRPPRILRLRPTRTGLVLRLKLRPGQDAFDVAATTDRLRHSFGVYGVTSRELRSGVVEVRMTGYDVLQRVQMPATAETRPMRIPVALREDGAVHYRDYRAVPHGLTLGATESGKSVYQRNLVAGLAPHHVALVGIDCKQGVELFPLARRFSALADNPDTALDLLEALVGHMEDVYQLIRAEQRISVAVPDAEIAADIWDLREDLRPVPVVVLVDEVAELALFATKDEEKRRDRIITALVRLAQLGRAAGIYLEICGQRFGSELGKGITMLRAQLTGRTAHRVNDETSANMAFGDVSPDAVLAAIQIPTDTPGVAVTGDSTGGWARIRAPHTTLREAVNICNKHADRTPDVPALAAFRPALAPLPQARVPLSKTAPATA.

Positions aspartate 127 to asparagine 326 constitute a FtsK domain. Glycine 145 to serine 152 lines the ATP pocket.

In Streptomyces ambofaciens, this protein is Transfer protein TraSA (traSA).